Here is a 137-residue protein sequence, read N- to C-terminus: Large-conductance mechanosensitive channel (137 aa).

2 helical membrane-spanning segments follow: residues 9–29 (AFAV…GAAF) and 79–99 (IQTI…VKAI).

The protein belongs to the MscL family. In terms of assembly, homopentamer.

It localises to the cell inner membrane. Functionally, channel that opens in response to stretch forces in the membrane lipid bilayer. May participate in the regulation of osmotic pressure changes within the cell. This chain is Large-conductance mechanosensitive channel, found in Pseudomonas aeruginosa (strain UCBPP-PA14).